The chain runs to 233 residues: Zinc import ATP-binding protein ZnuC (233 aa).

An ABC transporter domain is found at 6 to 222 (IEFHNVSKKF…SDFSNALSSL (217 aa)). 38-45 (GPNGAGKT) provides a ligand contact to ATP.

The protein belongs to the ABC transporter superfamily. Zinc importer (TC 3.A.1.15.5) family. As to quaternary structure, the complex is composed of two ATP-binding proteins (ZnuC), two transmembrane proteins (ZnuB) and a solute-binding protein (ZnuA).

It is found in the cell inner membrane. The catalysed reaction is Zn(2+)(out) + ATP(in) + H2O(in) = Zn(2+)(in) + ADP(in) + phosphate(in) + H(+)(in). Part of the ABC transporter complex ZnuABC involved in zinc import. Responsible for energy coupling to the transport system. The protein is Zinc import ATP-binding protein ZnuC of Rickettsia bellii (strain RML369-C).